The primary structure comprises 393 residues: Peptidyl-prolyl cis-trans isomerase CYP7 (393 aa).

The PPIase cyclophilin-type domain occupies 8–196 (YLDISIDKKP…SDVRISDCGV (189 aa)). TPR repeat units lie at residues 240–273 (ANIIKESGTLLFKKKDYSNAFFKYRKSLNYINEY), 292–325 (MKIYLNLSLVLFNLERYDDAIMYATYLLEMDNVP), and 330–363 (AKAYYRRGNSYLKKKRLDEALQDYIFCKEKNPDD).

As to quaternary structure, interacts with RPD3 and CNS1.

The catalysed reaction is [protein]-peptidylproline (omega=180) = [protein]-peptidylproline (omega=0). PPIases accelerate the folding of proteins. It catalyzes the cis-trans isomerization of proline imidic peptide bonds in oligopeptides. Plays a major role in negative regulation of the heat shock transcription factor (HSF). In Saccharomyces cerevisiae (strain ATCC 204508 / S288c) (Baker's yeast), this protein is Peptidyl-prolyl cis-trans isomerase CYP7 (CPR7).